Consider the following 241-residue polypeptide: uncharacterized protein (241 aa).

This sequence belongs to the AB hydrolase superfamily. AB hydrolase 2 family.

This is an uncharacterized protein from Schizosaccharomyces pombe (strain 972 / ATCC 24843) (Fission yeast).